The primary structure comprises 225 residues: Ribose-5-phosphate isomerase A (225 aa).

Substrate-binding positions include 33–36 (TGST), 86–89 (DGAD), and 99–102 (KGGG). Residue glutamate 108 is the Proton acceptor of the active site. Lysine 126 is a binding site for substrate.

This sequence belongs to the ribose 5-phosphate isomerase family. Homodimer.

The enzyme catalyses aldehydo-D-ribose 5-phosphate = D-ribulose 5-phosphate. Its pathway is carbohydrate degradation; pentose phosphate pathway; D-ribose 5-phosphate from D-ribulose 5-phosphate (non-oxidative stage): step 1/1. In terms of biological role, catalyzes the reversible conversion of ribose-5-phosphate to ribulose 5-phosphate. This chain is Ribose-5-phosphate isomerase A, found in Bordetella petrii (strain ATCC BAA-461 / DSM 12804 / CCUG 43448).